We begin with the raw amino-acid sequence, 64 residues long: Prokaryotic ubiquitin-like protein Pup (64 aa).

Over residues 1–11 the composition is skewed to basic and acidic residues; that stretch reads MAQEQTKRTGG. Residues 1-38 are disordered; it reads MAQEQTKRTGGGDEDDTPGGDGAAGQERREKLAEDTDD. The tract at residues 21–58 is ARC ATPase binding; sequence DGAAGQERREKLAEDTDDLLDEIDDVLEENAEDFVRAY. A coiled-coil region spans residues 24-52; that stretch reads AGQERREKLAEDTDDLLDEIDDVLEENAE. At Gln64 the chain carries Deamidated glutamine. Gln64 is covalently cross-linked (Isoglutamyl lysine isopeptide (Gln-Lys) (interchain with K-? in acceptor proteins)).

The protein belongs to the prokaryotic ubiquitin-like protein family. In terms of assembly, strongly interacts with the proteasome-associated ATPase ARC through a hydrophobic interface; the interacting region of Pup lies in its C-terminal half. There is one Pup binding site per ARC hexamer ring. Post-translationally, is modified by deamidation of its C-terminal glutamine to glutamate by the deamidase Dop, a prerequisite to the subsequent pupylation process.

The protein operates within protein degradation; proteasomal Pup-dependent pathway. In terms of biological role, protein modifier that is covalently attached to lysine residues of substrate proteins, thereby targeting them for proteasomal degradation. The tagging system is termed pupylation. In Rhodococcus opacus (strain B4), this protein is Prokaryotic ubiquitin-like protein Pup.